The chain runs to 650 residues: MLRVQLTDGHTSCTAVELNHLSKISLNTPPGTKIKLLGTIEVKNGYLLLDDTNTVVLGGEVEHLIEKWELQRSLSKHSRSNIGIEGGPPPFVPFGQRCASVASVDSKELDSRKTLQASSVTKAVGENDEFEKQRTAAIAEVAKSKETKTFGGGGNAGSNLNPGAGGSRNREVFQKEKIIRAEGKSEGVYRELVDEKALRHITEMGFCKDAARQALMDHSNNVEAALNFLLTGSKPKVVQGPPPRGKGKGRGRTRGEEDDELTSARPSAPSTLFDFLESKMGSFSIEDNKSHSQAQSQTHPKALNLEQNGIKDYNQPRQFTRNDTRAPRNEKPPRFQKEIQASRQYEGNGPPKSRGPEKQSSSVAEHWMEDRNKCERGYPRNDRLKDFSHPPSNHQNEGSYRKSCNNPMQSRGIKGGNHTEVKVEFHHQNSTTEGSHQKRGKKDDQRYNSEFYTDRRARTGNNETVASTPNEKCFSANNELSNFQTILIKEGANDLSNGEVDQKARRFGPIKPIGTNLNSTHDDKSKMFSYNNTKKKSGSIKPDKPLEAVYSGFSWRSGDECLALYWEDNKYYRAEVEALHSSGTTAVVKFSDYGNYEEVLLENIRPIQAEAWEEEGEFGDSLDFRRGGDGQPRRSTRPTQQFYQPPRARN.

Positions 147–169 are disordered; it reads TKTFGGGGNAGSNLNPGAGGSRN. The UBA domain occupies 192-232; the sequence is LVDEKALRHITEMGFCKDAARQALMDHSNNVEAALNFLLTG. Disordered regions lie at residues 233-271, 286-406, and 427-447; these read SKPK…APST, EDNK…SCNN, and HQNS…DQRY. Basic and acidic residues-rich tracts occupy residues 320-337 and 366-388; these read TRND…RFQK and HWME…KDFS. Positions 390–406 are enriched in polar residues; sequence PPSNHQNEGSYRKSCNN. The 61-residue stretch at 554–614 folds into the Tudor domain; sequence SWRSGDECLA…RPIQAEAWEE (61 aa). A disordered region spans residues 616 to 650; that stretch reads GEFGDSLDFRRGGDGQPRRSTRPTQQFYQPPRARN. Residues 622–632 are compositionally biased toward basic and acidic residues; it reads LDFRRGGDGQP.

In terms of assembly, component of mRNA stress granules.

Its subcellular location is the cytoplasm. The protein localises to the nucleus. In terms of biological role, scaffolding protein that specifically recognizes and binds dimethylarginine-containing proteins. Plays a role in the regulation of translation of target mRNAs by binding Arg/Gly-rich motifs (GAR) in dimethylarginine-containing proteins. In nucleus, acts as a coactivator: recognizes and binds asymmetric dimethylation on the core histone tails associated with transcriptional activation (H3R17me2a and H4R3me2a) and recruits proteins at these arginine-methylated loci. In cytoplasm, acts as an antiviral factor that participates in the assembly of stress granules together with G3BP1. This chain is Tudor domain-containing protein 3 (tdrd3), found in Xenopus laevis (African clawed frog).